A 345-amino-acid chain; its full sequence is Fe-S cluster assembly protein DRE2 (345 aa).

Residues 29 to 163 (GDSGDRTLLL…KPDYAEQEVV (135 aa)) form an N-terminal SAM-like domain region. The interval 164 to 237 (PLRFGAKKVN…EDTLLTEADL (74 aa)) is linker. [2Fe-2S] cluster contacts are provided by Cys-247, Cys-258, Cys-261, and Cys-263. Residues 247 to 263 (CAPQPGKKRRACKDCTC) are fe-S binding site A. [4Fe-4S] cluster-binding residues include Cys-308, Cys-311, Cys-319, and Cys-322. 2 short sequence motifs (cx2C motif) span residues 308-311 (CNSC) and 319-322 (CADC). The fe-S binding site B stretch occupies residues 308–322 (CNSCYLGDAFRCADC).

Belongs to the anamorsin family. Monomer. Interacts with TAH18. Interacts with MIA40. It depends on [2Fe-2S] cluster as a cofactor. The cofactor is [4Fe-4S] cluster.

The protein localises to the cytoplasm. It localises to the mitochondrion intermembrane space. Its function is as follows. Component of the cytosolic iron-sulfur (Fe-S) protein assembly (CIA) machinery required for the maturation of extramitochondrial Fe-S proteins. Part of an electron transfer chain functioning in an early step of cytosolic Fe-S biogenesis, facilitating the de novo assembly of a [4Fe-4S] cluster on the scaffold complex CFD1-NBP35. Electrons are transferred to DRE2 from NADPH via the FAD- and FMN-containing protein TAH18. TAH18-DRE2 are also required for the assembly of the diferric tyrosyl radical cofactor of ribonucleotide reductase (RNR), probably by providing electrons for reduction during radical cofactor maturation in the catalytic small subunit RNR2. The protein is Fe-S cluster assembly protein DRE2 of Podospora anserina (strain S / ATCC MYA-4624 / DSM 980 / FGSC 10383) (Pleurage anserina).